A 944-amino-acid chain; its full sequence is MSDYKSTLNLPETGFPMRGDLAKREPGMLARWTDDDLYGIIRAAKKGKKTFILHDGPPYANGSIHIGHSVNKILKDIIVKSKGLSGFDSPYVPGWDCHGLPIELKVEQEFGKPGEKFTAAEFRAKCREYAATQVDGQRKDFIRLGVLGDWSHPYLTMDFKTEANIIRALGRIIKNGHLHKGAKPVHWCVDCRSALAEAEVEYYDKTSPSIDVAFRAVDQDAVKAKFGLPGVSGPVSLVIWTTTPWTLPANRAISLAPDFDYALVQIDGQAVILAKDLVESVMQRIGAAEYTILGTVKGAELELLRFTHPFMGFDVPAILGDHVTLDAGTGAVHTAPGHGPDDYVIGQKYGLETANPVGPDGAYLPGTYPTLDGVNVFKANDIVIELLKEKGALLHVEKMQHSYPCCWRHKTPIIFRATPQWFVSMDKEGLRQQSLKEIKGVQWIPDWGQARIESMVANRPDWCISRQRTWGVPMSLFVHKETQELLPIERTLAAMEEVAKRVEVDGIQAWWDLDPKEILGEDADQYEKVPDTLDVWFDSGSTSYSVVDARPEFAGHAADMYLEGSDQHRGWFMSSLMISVAMKGKAPYRQVLTHGFTVDGQGRKMSKSIGNTVSPQDVMNKLGADILRLWVASTDYTGEMAVSDEILKRAADSYRRIRNTARFLLANLNGFNPATDMVKPEEMVVLDRWAVGCAKTAQQEILKAYEAYDFHEVVQRLMRFCSVEMGSFYLDIIKDRQYTAKADSVARRSCQTALYHIAEALVRWMAPIMSFTADEIWGYLLGEREKYVFTGEWYDGLFGLEENEEFNDAFWDDVRYIKDQINKELENQKANGIKSNLEAKVTLKYADDANGTIKKLKLLGEEVRFIFITSQFVISEQAGGIDDENIQYNAGNTTVQAVVTRAEGDKCPRCWHYTTDVGKVAEHADICGRCVSNIAGNGEQRKFA.

Residues Pro-58–His-68 carry the 'HIGH' region motif. An L-isoleucyl-5'-AMP-binding site is contributed by Glu-563. The short motif at Lys-604–Ser-608 is the 'KMSKS' region element. Lys-607 contributes to the ATP binding site. Residues Cys-907, Cys-910, Cys-927, and Cys-930 each contribute to the Zn(2+) site.

Belongs to the class-I aminoacyl-tRNA synthetase family. IleS type 1 subfamily. In terms of assembly, monomer. Requires Zn(2+) as cofactor.

It localises to the cytoplasm. It carries out the reaction tRNA(Ile) + L-isoleucine + ATP = L-isoleucyl-tRNA(Ile) + AMP + diphosphate. Its function is as follows. Catalyzes the attachment of isoleucine to tRNA(Ile). As IleRS can inadvertently accommodate and process structurally similar amino acids such as valine, to avoid such errors it has two additional distinct tRNA(Ile)-dependent editing activities. One activity is designated as 'pretransfer' editing and involves the hydrolysis of activated Val-AMP. The other activity is designated 'posttransfer' editing and involves deacylation of mischarged Val-tRNA(Ile). The chain is Isoleucine--tRNA ligase from Salmonella paratyphi A (strain ATCC 9150 / SARB42).